A 352-amino-acid chain; its full sequence is DNA polymerase IV (352 aa).

Residues 4 to 185 enclose the UmuC domain; sequence IIHVDMDCFF…LPLSKIPGVG (182 aa). Mg(2+) is bound by residues aspartate 8 and aspartate 103. The active site involves glutamate 104.

Belongs to the DNA polymerase type-Y family. In terms of assembly, monomer. The cofactor is Mg(2+).

The protein resides in the cytoplasm. The enzyme catalyses DNA(n) + a 2'-deoxyribonucleoside 5'-triphosphate = DNA(n+1) + diphosphate. Its function is as follows. Poorly processive, error-prone DNA polymerase involved in untargeted mutagenesis. Copies undamaged DNA at stalled replication forks, which arise in vivo from mismatched or misaligned primer ends. These misaligned primers can be extended by PolIV. Exhibits no 3'-5' exonuclease (proofreading) activity. May be involved in translesional synthesis, in conjunction with the beta clamp from PolIII. The protein is DNA polymerase IV of Enterobacter sp. (strain 638).